A 336-amino-acid polypeptide reads, in one-letter code: Phospho-N-acetylmuramoyl-pentapeptide-transferase (336 aa).

10 helical membrane-spanning segments follow: residues 3–23 (LTLI…PYFI), 53–73 (GGTV…LFSI), 78–98 (SLAL…IGFL), 118–138 (LALQ…PSGI), 143–163 (VFGY…FWVV), 174–194 (GIDG…GVIA), 200–220 (FDVL…FCFN), 226–246 (VFMG…ISIA), 251–271 (WTLL…MLQV), and 316–336 (AFLW…LYVF).

It belongs to the glycosyltransferase 4 family. MraY subfamily. Mg(2+) is required as a cofactor.

The protein resides in the cell membrane. The enzyme catalyses UDP-N-acetyl-alpha-D-muramoyl-L-alanyl-gamma-D-glutamyl-L-lysyl-D-alanyl-D-alanine + di-trans,octa-cis-undecaprenyl phosphate = Mur2Ac(oyl-L-Ala-gamma-D-Glu-L-Lys-D-Ala-D-Ala)-di-trans,octa-cis-undecaprenyl diphosphate + UMP. It participates in cell wall biogenesis; peptidoglycan biosynthesis. Its function is as follows. Catalyzes the initial step of the lipid cycle reactions in the biosynthesis of the cell wall peptidoglycan: transfers peptidoglycan precursor phospho-MurNAc-pentapeptide from UDP-MurNAc-pentapeptide onto the lipid carrier undecaprenyl phosphate, yielding undecaprenyl-pyrophosphoryl-MurNAc-pentapeptide, known as lipid I. This is Phospho-N-acetylmuramoyl-pentapeptide-transferase from Streptococcus pyogenes serotype M1.